The primary structure comprises 840 residues: E3 ubiquitin-protein ligase SH3RF1 (840 aa).

The segment at 12–53 adopts an RING-type zinc-finger fold; the sequence is CPVCLERLDASAKVLPCQHTFCKRCLLGIVGSRNELRCPECR. The interval 105 to 129 is disordered; that stretch reads VTCSPKDGPSSQGGPQPRAQAWSPP. 2 SH3 domains span residues 134 to 193 and 196 to 259; these read PQLP…IIKP and QPPP…FNSA. Disordered regions lie at residues 267–324, 394–442, 516–545, 578–633, 652–723, and 744–773; these read DQPP…RHSM, TLNP…PRPS, GPAS…VAGG, QARS…AASG, AASL…LGAE, and MAPG…SLGP. Residues 273–282 show a composition bias toward low complexity; the sequence is GVAAGEGALA. The span at 283 to 292 shows a compositional bias: polar residues; sequence TTPSSTTTKQ. The segment at 292 to 362 is interaction with RAC1; that stretch reads QPDGKKNTKK…APSQVHISTT (71 aa). Ser-304 bears the Phosphoserine mark. Low complexity-rich tracts occupy residues 307-320 and 405-424; these read SLSM…AAQQ and QAAT…GPRP. The segment at 434-537 is interaction with AKT2; that stretch reads HPRPQPRPSV…PSTGGPAQKP (104 aa). The SH3 3 domain maps to 439–500; the sequence is PRPSVYVAIY…PGNYVAPVTR (62 aa). The span at 616-625 shows a compositional bias: pro residues; it reads SPQPPAPLGP. The segment covering 681–692 has biased composition (basic and acidic residues); the sequence is RPDKDGKKEKKG. Ser-709 bears the Phosphoserine mark. Residues 781–840 form the SH3 4 domain; the sequence is AVCERHRVVVSYPPQSEAELELKEGDIVFVHKKREDGWFKGTLQRNGKTGLFPGSFVENI.

It belongs to the SH3RF family. Interacts with RAC1; in a GTP-dependent manner. Interacts with MAP3K10/MLK2 and MAP3K11/MLK3. Interacts with MAPK8IP; this interaction leads to the PJAC complex (POSH-JIP or SH3RF1/MAPK8IP apoptotic complex) with a 1:1 ratio. Interacts with SIAH1. Interacts with HERP1. Probably part of a signaling complex that may contain SH3RF1, MAPK8IP, DLK1, MAP2K4/MKK4, MAP2K7/MKK7, MAPK8/JNK1, MAPK9/JNK2, AKT1 and AKT2. Found in a complex with RAC2, MAP3K7/TAK1, MAP2K7/MKK7, MAPK8IP1/JIP1, MAPK8/JNK1 and MAPK9/JNK2. Found in a complex with RAC1, MAP3K11/MLK3, MAP2K7/MKK7, MAPK8IP1/JIP1 and MAPK8/JNK1. Interacts with SH3RF2. In terms of processing, phosphorylated at Ser-304 by AKT1 and AKT2. When phosphorylated, it has reduced ability to bind Rac. Autoubiquitinated. Ubiquitinated by SH3RF2, leading to proteasome-mediated degradation.

The protein localises to the cytoplasm. Its subcellular location is the perinuclear region. It localises to the cell projection. The protein resides in the lamellipodium. It is found in the golgi apparatus. The protein localises to the trans-Golgi network. It catalyses the reaction S-ubiquitinyl-[E2 ubiquitin-conjugating enzyme]-L-cysteine + [acceptor protein]-L-lysine = [E2 ubiquitin-conjugating enzyme]-L-cysteine + N(6)-ubiquitinyl-[acceptor protein]-L-lysine.. It participates in protein modification; protein ubiquitination. In terms of biological role, has E3 ubiquitin-protein ligase activity. In the absence of an external substrate, it can catalyze self-ubiquitination. Stimulates ubiquitination of potassium channel KCNJ1, enhancing it's dynamin-dependent and clathrin-independent endocytosis. Acts as a scaffold protein that coordinates with MAPK8IP1/JIP1 in organizing different components of the JNK pathway, including RAC1 or RAC2, MAP3K11/MLK3 or MAP3K7/TAK1, MAP2K7/MKK7, MAPK8/JNK1 and/or MAPK9/JNK2 into a functional multiprotein complex to ensure the effective activation of the JNK signaling pathway. Regulates the differentiation of CD4(+) and CD8(+) T-cells and promotes T-helper 1 (Th1) cell differentiation. Regulates the activation of MAPK8/JNK1 and MAPK9/JNK2 in CD4(+) T-cells and the activation of MAPK8/JNK1 in CD8(+) T-cells. Plays a crucial role in the migration of neocortical neurons in the developing brain. Controls proper cortical neuronal migration and the formation of proximal cytoplasmic dilation in the leading process (PCDLP) in migratory neocortical neurons by regulating the proper localization of activated RAC1 and F-actin assembly. The polypeptide is E3 ubiquitin-protein ligase SH3RF1 (SH3RF1) (Bos taurus (Bovine)).